The following is a 195-amino-acid chain: NADH-quinone oxidoreductase subunit B (195 aa).

[4Fe-4S] cluster contacts are provided by cysteine 74, cysteine 75, cysteine 139, and cysteine 169.

This sequence belongs to the complex I 20 kDa subunit family. In terms of assembly, NDH-1 is composed of 14 different subunits. Subunits NuoB, C, D, E, F, and G constitute the peripheral sector of the complex. It depends on [4Fe-4S] cluster as a cofactor.

Its subcellular location is the cell inner membrane. It carries out the reaction a quinone + NADH + 5 H(+)(in) = a quinol + NAD(+) + 4 H(+)(out). Functionally, NDH-1 shuttles electrons from NADH, via FMN and iron-sulfur (Fe-S) centers, to quinones in the respiratory chain. The immediate electron acceptor for the enzyme in this species is believed to be ubiquinone. Couples the redox reaction to proton translocation (for every two electrons transferred, four hydrogen ions are translocated across the cytoplasmic membrane), and thus conserves the redox energy in a proton gradient. The protein is NADH-quinone oxidoreductase subunit B of Methylorubrum extorquens (strain PA1) (Methylobacterium extorquens).